Reading from the N-terminus, the 159-residue chain is Ribosomal RNA large subunit methyltransferase H (159 aa).

S-adenosyl-L-methionine contacts are provided by residues Leu-76, Gly-108, and 127–132 (FGLLTF).

It belongs to the RNA methyltransferase RlmH family. As to quaternary structure, homodimer.

It is found in the cytoplasm. It carries out the reaction pseudouridine(1915) in 23S rRNA + S-adenosyl-L-methionine = N(3)-methylpseudouridine(1915) in 23S rRNA + S-adenosyl-L-homocysteine + H(+). Functionally, specifically methylates the pseudouridine at position 1915 (m3Psi1915) in 23S rRNA. In Streptococcus thermophilus (strain CNRZ 1066), this protein is Ribosomal RNA large subunit methyltransferase H.